The chain runs to 188 residues: Elongation factor P (188 aa).

It belongs to the elongation factor P family.

The protein localises to the cytoplasm. Its pathway is protein biosynthesis; polypeptide chain elongation. In terms of biological role, involved in peptide bond synthesis. Stimulates efficient translation and peptide-bond synthesis on native or reconstituted 70S ribosomes in vitro. Probably functions indirectly by altering the affinity of the ribosome for aminoacyl-tRNA, thus increasing their reactivity as acceptors for peptidyl transferase. The protein is Elongation factor P of Leptospira borgpetersenii serovar Hardjo-bovis (strain JB197).